The sequence spans 418 residues: UDP-N-acetylglucosamine 1-carboxyvinyltransferase 2 (418 aa).

22 to 23 (KN) is a binding site for phosphoenolpyruvate. Arg93 serves as a coordination point for UDP-N-acetyl-alpha-D-glucosamine. Cys117 serves as the catalytic Proton donor. Cys117 carries the post-translational modification 2-(S-cysteinyl)pyruvic acid O-phosphothioketal. UDP-N-acetyl-alpha-D-glucosamine-binding positions include 122–126 (RPIDQ), Asp305, and Ile327.

The protein belongs to the EPSP synthase family. MurA subfamily.

Its subcellular location is the cytoplasm. The enzyme catalyses phosphoenolpyruvate + UDP-N-acetyl-alpha-D-glucosamine = UDP-N-acetyl-3-O-(1-carboxyvinyl)-alpha-D-glucosamine + phosphate. It functions in the pathway cell wall biogenesis; peptidoglycan biosynthesis. In terms of biological role, cell wall formation. Adds enolpyruvyl to UDP-N-acetylglucosamine. The polypeptide is UDP-N-acetylglucosamine 1-carboxyvinyltransferase 2 (Clostridium acetobutylicum (strain ATCC 824 / DSM 792 / JCM 1419 / IAM 19013 / LMG 5710 / NBRC 13948 / NRRL B-527 / VKM B-1787 / 2291 / W)).